The chain runs to 317 residues: MKLSEIAQKTGASFSGEDIEIFALNSLKNANKAELSYCDGEKNAKFIAGSNAGAILISQNLTSFVPEGMSALVCENPHLAFAILSKDFAKPLFCEPKPSNIAESATIMSNAYIGSNVSVGEGSIVMAGVFLGDNVKIGQNCIIHPNVVIYNDCVIGDECHLLANCVIGSDGFGYAHTKTGEHVKIYHNGNVVLGDFVEVGACTTIDRGVFESTMIASYTKIDNLVQIGHNCELGNGCLIVSQTGLAGSTTLGRNVVMGGQSGSAGHVRVGDFAQIAARGGVSKDLDAGKKYAGAYPIMPLDEFFKIQAKILRFFKKN.

Residue His-229 is the Proton acceptor of the active site.

It belongs to the transferase hexapeptide repeat family. LpxD subfamily. As to quaternary structure, homotrimer.

The catalysed reaction is a UDP-3-O-[(3R)-3-hydroxyacyl]-alpha-D-glucosamine + a (3R)-hydroxyacyl-[ACP] = a UDP-2-N,3-O-bis[(3R)-3-hydroxyacyl]-alpha-D-glucosamine + holo-[ACP] + H(+). Its pathway is bacterial outer membrane biogenesis; LPS lipid A biosynthesis. In terms of biological role, catalyzes the N-acylation of UDP-3-O-acylglucosamine using 3-hydroxyacyl-ACP as the acyl donor. Is involved in the biosynthesis of lipid A, a phosphorylated glycolipid that anchors the lipopolysaccharide to the outer membrane of the cell. This chain is UDP-3-O-acylglucosamine N-acyltransferase, found in Campylobacter curvus (strain 525.92).